The chain runs to 258 residues: Imidazole glycerol phosphate synthase subunit HisF (258 aa).

Residues Asp11 and Asp130 contribute to the active site.

This sequence belongs to the HisA/HisF family. Heterodimer of HisH and HisF.

The protein localises to the cytoplasm. It carries out the reaction 5-[(5-phospho-1-deoxy-D-ribulos-1-ylimino)methylamino]-1-(5-phospho-beta-D-ribosyl)imidazole-4-carboxamide + L-glutamine = D-erythro-1-(imidazol-4-yl)glycerol 3-phosphate + 5-amino-1-(5-phospho-beta-D-ribosyl)imidazole-4-carboxamide + L-glutamate + H(+). It functions in the pathway amino-acid biosynthesis; L-histidine biosynthesis; L-histidine from 5-phospho-alpha-D-ribose 1-diphosphate: step 5/9. Functionally, IGPS catalyzes the conversion of PRFAR and glutamine to IGP, AICAR and glutamate. The HisF subunit catalyzes the cyclization activity that produces IGP and AICAR from PRFAR using the ammonia provided by the HisH subunit. The protein is Imidazole glycerol phosphate synthase subunit HisF of Methylorubrum populi (strain ATCC BAA-705 / NCIMB 13946 / BJ001) (Methylobacterium populi).